The following is a 422-amino-acid chain: Glutamyl-tRNA reductase (422 aa).

Substrate contacts are provided by residues 50 to 53 (TCNR), serine 110, 115 to 117 (ETQ), and glutamine 121. The active-site Nucleophile is the cysteine 51. 190 to 195 (GAGEMS) serves as a coordination point for NADP(+).

The protein belongs to the glutamyl-tRNA reductase family. In terms of assembly, homodimer.

It catalyses the reaction (S)-4-amino-5-oxopentanoate + tRNA(Glu) + NADP(+) = L-glutamyl-tRNA(Glu) + NADPH + H(+). The protein operates within porphyrin-containing compound metabolism; protoporphyrin-IX biosynthesis; 5-aminolevulinate from L-glutamyl-tRNA(Glu): step 1/2. Its function is as follows. Catalyzes the NADPH-dependent reduction of glutamyl-tRNA(Glu) to glutamate 1-semialdehyde (GSA). The chain is Glutamyl-tRNA reductase from Campylobacter fetus subsp. fetus (strain 82-40).